The chain runs to 1198 residues: Rac guanine nucleotide exchange factor B (1198 aa).

Residues 1 to 104 form a disordered region; the sequence is MFSNFFGSSK…QHQGVITSLQ (104 aa). Residues 8 to 20 show a composition bias toward low complexity; it reads SSKRNTIASSSSS. The segment covering 21-34 has biased composition (basic and acidic residues); sequence SKKDKDNGKDESSK. The span at 35-58 shows a compositional bias: polar residues; it reads LKNSGSSTLPKPITNNESGNNFIT. Residues 59–97 are compositionally biased toward low complexity; it reads SPSVSSPLISPLSSSPSPLLSSSSNSIQSTSHQQQQQHQ. The 107-residue stretch at 126–232 folds into the Calponin-homology (CH) 1 domain; that stretch reads SSLEQTARKW…NIVVLGKHAS (107 aa). A disordered region spans residues 260 to 284; it reads FGGNHNNNNNNNNNNNTSNGDLSPV. A compositionally biased stretch (low complexity) spans 263–275; it reads NHNNNNNNNNNNN. Calponin-homology (CH) domains follow at residues 341–449 and 511–619; these read PELQ…NKMY and PEDM…ENFD. The DH domain maps to 632-846; it reads RRQKVIEEII…KRVADHVNES (215 aa). The region spanning 876 to 1026 is the PH domain; the sequence is TYIREGFLEI…WMEDLRSCLQ (151 aa). A compositionally biased stretch (acidic residues) spans 940–952; that stretch reads GEACVDGDDDGGE. Disordered regions lie at residues 940–989 and 1076–1198; these read GEAC…SNKS and NNNN…IDNQ. Composition is skewed to low complexity over residues 977-989 and 1076-1118; these read NSNN…SNKS and NNNN…NNND. The segment covering 1155-1167 has biased composition (acidic residues); the sequence is DETISDTESDDYE. The span at 1188-1198 shows a compositional bias: polar residues; it reads FSDTIKNIDNQ.

In terms of assembly, binds to F-actin.

Its subcellular location is the late endosome. In terms of biological role, involved in the regulation of the late steps of the endocytic pathway. The sequence is that of Rac guanine nucleotide exchange factor B (gxcB) from Dictyostelium discoideum (Social amoeba).